A 440-amino-acid polypeptide reads, in one-letter code: Thymidine phosphorylase (440 aa).

This sequence belongs to the thymidine/pyrimidine-nucleoside phosphorylase family. In terms of assembly, homodimer.

It carries out the reaction thymidine + phosphate = 2-deoxy-alpha-D-ribose 1-phosphate + thymine. It participates in pyrimidine metabolism; dTMP biosynthesis via salvage pathway; dTMP from thymine: step 1/2. The enzymes which catalyze the reversible phosphorolysis of pyrimidine nucleosides are involved in the degradation of these compounds and in their utilization as carbon and energy sources, or in the rescue of pyrimidine bases for nucleotide synthesis. In Yersinia pseudotuberculosis serotype O:1b (strain IP 31758), this protein is Thymidine phosphorylase.